Here is a 339-residue protein sequence, read N- to C-terminus: MSLKHFLNTQDWSRAELDALLTQAALFKRNKLGSELKGKSIALVFFNPSMRTRTSFELGAFQLGGHAVVLQPGKDAWPIEFNLGTVMDGDTEEHIAEVARVLGRYVDLIGVRAFPKFVDWSKDREDQVLKSFAKYSPVPVINMETITHPCQELAHALALQEHFGTPDLRGKKYVLTWTYHPKPLNTAVANSALTIATRMGMDVTLLCPTPDYILDERYMDWAAQNVAESGGSLQVSHDIDSAYAGADVVYAKSWGALPFFGNWEPEKPIRDQYQHFIVDERKMALTNNGVFSHCLPLRRNVKATDAVMDSPNCIAIDEAENRLHVQKAIMAALVGQSRP.

Residues 49-52, tryptophan 77, and arginine 112 contribute to the carbamoyl phosphate site; that span reads SMRT. N(2)-acetyl-L-ornithine is bound at residue glutamate 144. A carbamoyl phosphate-binding site is contributed by 148–151; it reads HPCQ. N(2)-acetyl-L-ornithine is bound by residues lysine 252 and leucine 295. 294–295 contributes to the carbamoyl phosphate binding site; that stretch reads CL. Lysine 302 carries the post-translational modification N6-carboxylysine. Arginine 322 lines the carbamoyl phosphate pocket.

It belongs to the aspartate/ornithine carbamoyltransferase superfamily. AOTCase family. Homotrimer.

It localises to the cytoplasm. The catalysed reaction is N(2)-acetyl-L-ornithine + carbamoyl phosphate = N(2)-acetyl-L-citrulline + phosphate + H(+). It functions in the pathway amino-acid biosynthesis; L-arginine biosynthesis. Carboxylation at Lys-302 increases the catalytic activity of the enzyme. Is potently inhibited by N(alpha)-acetyl-N(delta)-phosphonoacetyl-L-ornithine (PALAO). Its function is as follows. Catalyzes the transfer of the carbamoyl group from carbamoyl phosphate to the delta-amino group of N(2)-acetyl-L-ornithine to produce N(2)-acetyl-L-citrulline. This is a step in an alternative arginine biosynthesis pathway. The enzyme has no activity with ornithine. This is N-acetylornithine carbamoyltransferase from Xanthomonas campestris pv. campestris (strain ATCC 33913 / DSM 3586 / NCPPB 528 / LMG 568 / P 25).